Here is a 316-residue protein sequence, read N- to C-terminus: ATP synthase gamma chain (316 aa).

This sequence belongs to the ATPase gamma chain family. As to quaternary structure, F-type ATPases have 2 components, CF(1) - the catalytic core - and CF(0) - the membrane proton channel. CF(1) has five subunits: alpha(3), beta(3), gamma(1), delta(1), epsilon(1). CF(0) has three main subunits: a, b and c.

It is found in the cellular thylakoid membrane. In terms of biological role, produces ATP from ADP in the presence of a proton gradient across the membrane. The gamma chain is believed to be important in regulating ATPase activity and the flow of protons through the CF(0) complex. In Prochlorococcus marinus (strain MIT 9301), this protein is ATP synthase gamma chain.